The chain runs to 112 residues: Protein BEX3 (112 aa).

Residues 1–45 (MANIHQENEEMEQPVQNGEEDRPLGGGEGHQPERNHRRGQARRLA) form a disordered region. The segment at 69-94 (EIFMEEMREIRRKLRELQLRNCLRIL) is interaction with p75NTR/NGFR. Positions 69–112 (EIFMEEMREIRRKLRELQLRNCLRILMGELSNHHDHHDEFCLMP) are interaction with 14-3-3 epsilon. The Nuclear export signal motif lies at 78 to 88 (IRRKLRELQLR). Residues 101 to 105 (HHDHH) are his cluster. Cys-109 contributes to the Zn(2+) binding site.

This sequence belongs to the BEX family. In terms of assembly, self-associates. Binds to the DEATH domain of p75NTR/NGFR. Interacts with 14-3-3 epsilon (YWHAE). Interacts with DIABLO/SMAC. In terms of processing, ubiquitinated. Degraded by the proteasome.

It localises to the nucleus. Its subcellular location is the cytoplasm. It is found in the cytosol. Its function is as follows. May be a signaling adapter molecule involved in NGFR/p75NTR-mediated apoptosis induced by NGF. Plays a role in zinc-triggered neuronal death. In absence of reductive stress, acts as a pseudosubstrate for the CRL2(FEM1B) complex: associates with FEM1B via zinc, thereby preventing association between FEM1B and its substrates. This Bos taurus (Bovine) protein is Protein BEX3.